A 227-amino-acid polypeptide reads, in one-letter code: MSLDTVDKLVVFLAKRDGIDKLVKTFQYVAKLACWHVEATRPEAADRFKKWEVASGLSRKAFRTGRSLTGFNALRRNPGATPMIRFLAVLANSGEMVYFFFDHFLWLSRIGSIDAKLAKKMSFISAFGESFGYTFFIIIDCIFIKQRLKSLKKLQHSTDEPKEEIGAKISEIRGDIVMRLMGISANVADLLIALAEIHPNPFCNHTITLGISGLVSAWAGWYRNWPS.

Residues 1 to 85 lie on the Cytoplasmic side of the membrane; it reads MSLDTVDKLV…RNPGATPMIR (85 aa). A helical transmembrane segment spans residues 86–106; that stretch reads FLAVLANSGEMVYFFFDHFLW. Over 107 to 201 the chain is Lumenal; it reads LSRIGSIDAK…IALAEIHPNP (95 aa). Residues 202 to 222 traverse the membrane as a helical segment; it reads FCNHTITLGISGLVSAWAGWY. Residues 223–227 are Cytoplasmic-facing; the sequence is RNWPS.

The protein belongs to the peroxin-11 family. As to quaternary structure, homooligomer. Interacts with ARC5 and FIS1B on peroxisomes. In terms of tissue distribution, expressed in roots, leaves and developing siliques.

The protein localises to the peroxisome membrane. Involved in peroxisomal proliferation. Promotes peroxisomal duplication, aggregation or elongation without fission. This chain is Peroxisomal membrane protein 11B (PEX11B), found in Arabidopsis thaliana (Mouse-ear cress).